Consider the following 99-residue polypeptide: Aspartyl/glutamyl-tRNA(Asn/Gln) amidotransferase subunit C (99 aa).

Belongs to the GatC family. Heterotrimer of A, B and C subunits.

It carries out the reaction L-glutamyl-tRNA(Gln) + L-glutamine + ATP + H2O = L-glutaminyl-tRNA(Gln) + L-glutamate + ADP + phosphate + H(+). The catalysed reaction is L-aspartyl-tRNA(Asn) + L-glutamine + ATP + H2O = L-asparaginyl-tRNA(Asn) + L-glutamate + ADP + phosphate + 2 H(+). Its function is as follows. Allows the formation of correctly charged Asn-tRNA(Asn) or Gln-tRNA(Gln) through the transamidation of misacylated Asp-tRNA(Asn) or Glu-tRNA(Gln) in organisms which lack either or both of asparaginyl-tRNA or glutaminyl-tRNA synthetases. The reaction takes place in the presence of glutamine and ATP through an activated phospho-Asp-tRNA(Asn) or phospho-Glu-tRNA(Gln). The chain is Aspartyl/glutamyl-tRNA(Asn/Gln) amidotransferase subunit C from Mycolicibacterium smegmatis (strain ATCC 700084 / mc(2)155) (Mycobacterium smegmatis).